A 302-amino-acid polypeptide reads, in one-letter code: MSLSGIITALATPFGPDGTLDLDAWRRLLEQQLHGGVQGIVVAGSTGEAAALSDDEYDTLVRAAVAQVAGRVQVLAGTGLSGTAKTIAQTRRAATLGAQYALVVTPPYVRPTQAGLLAHFQAVADNGGLPVVLYNVPGRTGCDLLPETVAALVSHPNIVGIKEARSEPERVAALVAMRSDRFVVLSGDDGSAAQSMLAGADGLVSVASNALPSAYRRLCDLARTGQHEAANAWDTRLSEYHSFCGIESNPIPVKALLQRAGIGHGLRLPLLPLSAAHQPAADRLAANAVALEALSSREMLAA.

Thr-46 serves as a coordination point for pyruvate. The Proton donor/acceptor role is filled by Tyr-134. Catalysis depends on Lys-162, which acts as the Schiff-base intermediate with substrate. Residue Val-204 participates in pyruvate binding.

The protein belongs to the DapA family. In terms of assembly, homotetramer; dimer of dimers.

Its subcellular location is the cytoplasm. The enzyme catalyses L-aspartate 4-semialdehyde + pyruvate = (2S,4S)-4-hydroxy-2,3,4,5-tetrahydrodipicolinate + H2O + H(+). It functions in the pathway amino-acid biosynthesis; L-lysine biosynthesis via DAP pathway; (S)-tetrahydrodipicolinate from L-aspartate: step 3/4. Its function is as follows. Catalyzes the condensation of (S)-aspartate-beta-semialdehyde [(S)-ASA] and pyruvate to 4-hydroxy-tetrahydrodipicolinate (HTPA). The chain is 4-hydroxy-tetrahydrodipicolinate synthase from Xanthomonas campestris pv. campestris (strain ATCC 33913 / DSM 3586 / NCPPB 528 / LMG 568 / P 25).